The following is a 241-amino-acid chain: DNA-binding dual master transcriptional regulator RpaA (241 aa).

The 117-residue stretch at Arg3–Leu119 folds into the Response regulatory domain. Asp52 carries the 4-aspartylphosphate modification. The segment at residues Ser132–Leu231 is a DNA-binding region (ompR/PhoB-type).

As to quaternary structure, interacts with reduced ferredoxin (petF). Interacts with CikA, RpaB, SasA, Sll0038 (pixG) and a number of other proteins. Post-translationally, phosphorylated by SasA; phosphorylation is maximal when KaiC phosphorylation is active during the circadian cycle. Dephosphorylated by CikA. CikA and SasA cooperation generates RpaA activity oscillation that is distinct from that generated by CikA or SasA alone and offset from the rhythm of KaiC phosphorylation.

Its subcellular location is the cytoplasm. Response regulator of 2 two-component regulatory systems SasA/RpaA and CikA/RpaA involved in genome-wide circadian gene expression. The histidine kinases have opposing effects modulated by the clock oscillator proteins; SasA phosphorylates RpaA (stimulated by fully phosphorylated KaiC1) while CikA dephosphorylates phospho-RpaA (stimulated by the phospho-Ser-432-KaiC1-KaiB complex). In terms of biological role, the RpaA regulon is about 300 genes, and includes itself, cikA, sigE, sigG, genes involved in photosynthesis, carbon metabolism in the light and dark, phototaxis, CRISPR arrays 2 and 3 as well as nearly 90 ncRNAs. Genes are up- or down-regulated in its absence. Involved in regulation of primary sugar and amino acid metabolism and in adaptation to light changes. Regulates the accumulation of the monomeric photosystem I and the D1 protein under high light conditions. Overexpression causes cells to grow more slowly, increases levels of transcripts for clock oscillator genes in the light and the dark, increases levels of SigE protein, increases accumulation of sugar catabolic enzymes in the dark with concomitant decreases in most sugar metabolites. Plays a role in cell division; overexpression from the psbAII promoter increases expression of some cell-division-related genes, alters cell volume and changes the outer cell membrane and cell wall appearance. The protein is DNA-binding dual master transcriptional regulator RpaA of Synechocystis sp. (strain ATCC 27184 / PCC 6803 / Kazusa).